The following is a 280-amino-acid chain: Undecaprenyl-diphosphatase (280 aa).

Helical transmembrane passes span 1–21, 45–65, 90–110, 115–135, 151–171, 226–246, and 260–280; these read MTLL…PFPV, FLPF…GVFW, IFGL…LLEH, VFGT…LLMV, IATL…LALL, IMVQ…ICSL, and LTPF…VILL.

It belongs to the UppP family.

It is found in the cell inner membrane. The catalysed reaction is di-trans,octa-cis-undecaprenyl diphosphate + H2O = di-trans,octa-cis-undecaprenyl phosphate + phosphate + H(+). Functionally, catalyzes the dephosphorylation of undecaprenyl diphosphate (UPP). Confers resistance to bacitracin. In Gluconobacter oxydans (strain 621H) (Gluconobacter suboxydans), this protein is Undecaprenyl-diphosphatase.